We begin with the raw amino-acid sequence, 293 residues long: uncharacterized protein (293 aa).

Disordered regions lie at residues 1–114 (MFLR…IPKL) and 268–293 (EETADWESEGQEREAKEQREGPGRML). A phosphoserine mark is found at Ser34, Ser35, and Ser89. Basic and acidic residues-rich tracts occupy residues 73-95 (SSRDLKVDQLGSKRMDSLKRDKT) and 277-293 (GQEREAKEQREGPGRML).

This is an uncharacterized protein from Mus musculus (Mouse).